Here is a 314-residue protein sequence, read N- to C-terminus: tRNA(Ile)-lysidine synthase, chloroplastic (314 aa).

31-36 (SGGQDS) is a binding site for ATP.

This sequence belongs to the tRNA(Ile)-lysidine synthase family.

The protein localises to the plastid. It is found in the chloroplast. It catalyses the reaction cytidine(34) in tRNA(Ile2) + L-lysine + ATP = lysidine(34) in tRNA(Ile2) + AMP + diphosphate + H(+). Functionally, ligates lysine onto the cytidine present at position 34 of the AUA codon-specific tRNA(Ile) that contains the anticodon CAU, in an ATP-dependent manner. Cytidine is converted to lysidine, thus changing the amino acid specificity of the tRNA from methionine to isoleucine. The polypeptide is tRNA(Ile)-lysidine synthase, chloroplastic (Cyanidium caldarium (Red alga)).